Here is a 383-residue protein sequence, read N- to C-terminus: Erythronate-4-phosphate dehydrogenase (383 aa).

Residues serine 45 and threonine 67 each contribute to the substrate site. Position 147 (aspartate 147) interacts with NAD(+). Arginine 208 is a catalytic residue. Aspartate 232 serves as a coordination point for NAD(+). Glutamate 237 is an active-site residue. The active-site Proton donor is histidine 254. Glycine 257 lines the NAD(+) pocket. Position 258 (tyrosine 258) interacts with substrate.

Belongs to the D-isomer specific 2-hydroxyacid dehydrogenase family. PdxB subfamily. Homodimer.

It localises to the cytoplasm. It carries out the reaction 4-phospho-D-erythronate + NAD(+) = (R)-3-hydroxy-2-oxo-4-phosphooxybutanoate + NADH + H(+). The protein operates within cofactor biosynthesis; pyridoxine 5'-phosphate biosynthesis; pyridoxine 5'-phosphate from D-erythrose 4-phosphate: step 2/5. In terms of biological role, catalyzes the oxidation of erythronate-4-phosphate to 3-hydroxy-2-oxo-4-phosphonooxybutanoate. This chain is Erythronate-4-phosphate dehydrogenase, found in Psychromonas ingrahamii (strain DSM 17664 / CCUG 51855 / 37).